A 690-amino-acid polypeptide reads, in one-letter code: Eukaryotic translation initiation factor 3 subunit B (690 aa).

The span at 1 to 11 shows a compositional bias: basic and acidic residues; it reads MAKKKSEDHSG. Residues 1-37 form a disordered region; sequence MAKKKSEDHSGGDANDSDYNEEPNFEDPPNFVDNISD. Residues 15 to 25 are compositionally biased toward acidic residues; that stretch reads NDSDYNEEPNF. Residues 57 to 141 enclose the RRM domain; sequence SVVVVDNIPK…HTFAVNLFTD (85 aa). WD repeat units follow at residues 207–246, 247–289, 293–331, 334–369, 442–484, and 530–575; these read TRER…KIQK, FPHT…EKRS, DGMS…LLDL, IKIP…TLME, EIRE…KPSL, and PDHF…IKRT. Residues 614–645 adopt a coiled-coil conformation; that stretch reads QKDRLRLTRASKELLEKRSQLRETFMEYRNKR.

The protein belongs to the eIF-3 subunit B family. Component of the eukaryotic translation initiation factor 3 (eIF-3) complex. The eIF-3 complex interacts with pix. Interacts with mxt.

The protein resides in the cytoplasm. Functionally, RNA-binding component of the eukaryotic translation initiation factor 3 (eIF-3) complex, which is involved in protein synthesis of a specialized repertoire of mRNAs and, together with other initiation factors, stimulates binding of mRNA and methionyl-tRNAi to the 40S ribosome. The eIF-3 complex specifically targets and initiates translation of a subset of mRNAs involved in cell proliferation. The polypeptide is Eukaryotic translation initiation factor 3 subunit B (Drosophila pseudoobscura pseudoobscura (Fruit fly)).